The following is a 275-amino-acid chain: 1-deoxy-11-beta-hydroxypentalenate dehydrogenase (275 aa).

12 to 36 (GAASGIGLALSARFARAGAGVVMAD) lines the NAD(+) pocket. Ser-144 serves as a coordination point for substrate. Tyr-157 (proton acceptor) is an active-site residue. Lys-161 contributes to the NAD(+) binding site.

The protein belongs to the short-chain dehydrogenases/reductases (SDR) family.

It carries out the reaction 1-deoxy-11beta-hydroxypentalenate + NAD(+) = 1-deoxy-11-oxopentalenate + NADH + H(+). The protein operates within antibiotic biosynthesis; pentalenolactone biosynthesis. Catalyzes the oxidation of 1-deoxy-11-beta-hydroxypentalenic acid to 1-deoxy-11-oxopentalenic acid in the biosynthesis of pentalenolactone antibiotic. The chain is 1-deoxy-11-beta-hydroxypentalenate dehydrogenase (penF) from Streptomyces exfoliatus (Streptomyces hydrogenans).